The primary structure comprises 239 residues: uncharacterized protein (239 aa).

An HTH cro/C1-type domain is found at 13–66 (IEYLVDKLNGPSEFARKTGVTLSTITRWRKGEADPSRSNLVKIAEVTGVSIEWL). Residues 24 to 43 (SEFARKTGVTLSTITRWRKG) constitute a DNA-binding region (H-T-H motif).

This is an uncharacterized protein from Haemophilus influenzae (strain ATCC 51907 / DSM 11121 / KW20 / Rd).